A 355-amino-acid chain; its full sequence is Histidinol-phosphate aminotransferase 2 (355 aa).

Position 210 is an N6-(pyridoxal phosphate)lysine (Lys-210).

The protein belongs to the class-II pyridoxal-phosphate-dependent aminotransferase family. Histidinol-phosphate aminotransferase subfamily. In terms of assembly, homodimer. It depends on pyridoxal 5'-phosphate as a cofactor.

It catalyses the reaction L-histidinol phosphate + 2-oxoglutarate = 3-(imidazol-4-yl)-2-oxopropyl phosphate + L-glutamate. Its pathway is amino-acid biosynthesis; L-histidine biosynthesis; L-histidine from 5-phospho-alpha-D-ribose 1-diphosphate: step 7/9. In Gluconobacter oxydans (strain 621H) (Gluconobacter suboxydans), this protein is Histidinol-phosphate aminotransferase 2.